We begin with the raw amino-acid sequence, 955 residues long: UvrABC system protein A (955 aa).

35–42 (GLSGSGKS) contributes to the ATP binding site. ABC transporter domains lie at 322-601 (WGST…EESI) and 621-951 (GHDN…RYLK). 654-661 (GVSGSGKS) serves as a coordination point for ATP. Residues 754–780 (CEACQGDGLIKIEMHFLPDVYVKCDIC) form a C4-type zinc finger.

Belongs to the ABC transporter superfamily. UvrA family. As to quaternary structure, forms a heterotetramer with UvrB during the search for lesions.

The protein resides in the cytoplasm. Its function is as follows. The UvrABC repair system catalyzes the recognition and processing of DNA lesions. UvrA is an ATPase and a DNA-binding protein. A damage recognition complex composed of 2 UvrA and 2 UvrB subunits scans DNA for abnormalities. When the presence of a lesion has been verified by UvrB, the UvrA molecules dissociate. This is UvrABC system protein A from Rickettsia felis (strain ATCC VR-1525 / URRWXCal2) (Rickettsia azadi).